The chain runs to 856 residues: Protein translocase subunit SecA (856 aa).

Residues glutamine 77, glycine 95–threonine 99, and aspartate 534 contribute to the ATP site.

Belongs to the SecA family. As to quaternary structure, monomer and homodimer. Part of the essential Sec protein translocation apparatus which comprises SecA, SecYEG and auxiliary proteins SecDF. Other proteins may also be involved.

It localises to the cell inner membrane. The protein resides in the cytoplasm. The enzyme catalyses ATP + H2O + cellular proteinSide 1 = ADP + phosphate + cellular proteinSide 2.. Part of the Sec protein translocase complex. Interacts with the SecYEG preprotein conducting channel. Has a central role in coupling the hydrolysis of ATP to the transfer of proteins into and across the cell membrane, serving as an ATP-driven molecular motor driving the stepwise translocation of polypeptide chains across the membrane. This Thermosipho africanus (strain TCF52B) protein is Protein translocase subunit SecA.